The sequence spans 357 residues: Inositol-tetrakisphosphate 1-kinase 3 (357 aa).

Residues lysine 56 and lysine 98 each contribute to the 1D-myo-inositol 1,3,4-trisphosphate site. Arginine 133 and lysine 183 together coordinate ATP. 1D-myo-inositol 1,3,4-trisphosphate contacts are provided by histidine 190 and lysine 222. Residues 211-222 (QEFVNHGGVLFK), serine 237, and serine 262 contribute to the ATP site. Residues aspartate 302, aspartate 317, and asparagine 319 each contribute to the Mg(2+) site. A 1D-myo-inositol 1,3,4-trisphosphate-binding site is contributed by asparagine 319.

Belongs to the ITPK1 family. As to quaternary structure, monomer. Requires Mg(2+) as cofactor. In terms of tissue distribution, expressed in roots, leaves, flowers, anthers and embryos.

It catalyses the reaction 1D-myo-inositol 3,4,5,6-tetrakisphosphate + ATP = 1D-myo-inositol 1,3,4,5,6-pentakisphosphate + ADP + H(+). The enzyme catalyses 1D-myo-inositol 1,3,4-trisphosphate + ATP = 1D-myo-inositol 1,3,4,5-tetrakisphosphate + ADP + H(+). The catalysed reaction is 1D-myo-inositol 1,3,4-trisphosphate + ATP = 1D-myo-inositol 1,3,4,6-tetrakisphosphate + ADP + H(+). Kinase that can phosphorylate various inositol polyphosphate such as Ins(3,4,5,6)P4 or Ins(1,3,4)P3 and participates in phytic acid biosynthesis in developing seeds. Phytic acid is the primary storage form of phosphorus in cereal grains and other plant seeds. The chain is Inositol-tetrakisphosphate 1-kinase 3 from Oryza sativa subsp. japonica (Rice).